A 165-amino-acid polypeptide reads, in one-letter code: Myosin regulatory light chain 2, ventricular/cardiac muscle isoform (165 aa).

Ser-2 carries the n,N,N-trimethylserine modification. Deamidated asparagine is present on Asn-14. Phosphoserine occurs at positions 15 and 19. EF-hand domains lie at 24–59 (TQIQEFKEAFTIMDQNRDGFIDKNDLRDTFAALGRV), 94–129 (DPEETILNAFKVFDPEGKGVLKADYVREMLTTQAER), and 130–165 (FSKDEIDQMFAAFPPDVTGNLDYKNLVHIITHGEEK). Asp-37, Asn-39, Asp-41, and Asp-48 together coordinate Ca(2+). Residue Thr-52 is modified to Phosphothreonine.

Myosin is a hexamer of 2 heavy chains and 4 light chains. Interacts with MYOC. In terms of processing, N-terminus is methylated by METTL11A/NTM1. Post-translationally, phosphorylated by MYLK3 and MYLK2; promotes cardiac muscle contraction and function. Dephosphorylated by PPP1CB complexed to PPP1R12B. The phosphorylated form in adult is expressed as gradients across the heart from endocardium (low phosphorylation) to epicardium (high phosphorylation); regulates cardiac torsion and workload distribution.

The protein resides in the cytoplasm. It localises to the myofibril. It is found in the sarcomere. The protein localises to the a band. Contractile protein that plays a role in heart development and function. Following phosphorylation, plays a role in cross-bridge cycling kinetics and cardiac muscle contraction by increasing myosin lever arm stiffness and promoting myosin head diffusion; as a consequence of the increase in maximum contraction force and calcium sensitivity of contraction force. These events altogether slow down myosin kinetics and prolong duty cycle resulting in accumulated myosins being cooperatively recruited to actin binding sites to sustain thin filament activation as a means to fine-tune myofilament calcium sensitivity to force. During cardiogenesis plays an early role in cardiac contractility by promoting cardiac myofibril assembly. The chain is Myosin regulatory light chain 2, ventricular/cardiac muscle isoform from Oryctolagus cuniculus (Rabbit).